The following is a 130-amino-acid chain: Small ribosomal subunit protein uS11 (130 aa).

The protein belongs to the universal ribosomal protein uS11 family. As to quaternary structure, part of the 30S ribosomal subunit. Interacts with proteins S7 and S18. Binds to IF-3.

Functionally, located on the platform of the 30S subunit, it bridges several disparate RNA helices of the 16S rRNA. Forms part of the Shine-Dalgarno cleft in the 70S ribosome. This is Small ribosomal subunit protein uS11 from Nautilia profundicola (strain ATCC BAA-1463 / DSM 18972 / AmH).